We begin with the raw amino-acid sequence, 405 residues long: Putative aminotransferase AatC (405 aa).

An N6-(pyridoxal phosphate)lysine modification is found at K238.

It belongs to the class-I pyridoxal-phosphate-dependent aminotransferase family. Homodimer. It depends on pyridoxal 5'-phosphate as a cofactor.

The protein localises to the cytoplasm. This chain is Putative aminotransferase AatC (aatC), found in Rhizobium meliloti (strain 1021) (Ensifer meliloti).